The chain runs to 132 residues: Ribosome-binding factor A (132 aa).

Belongs to the RbfA family. Monomer. Binds 30S ribosomal subunits, but not 50S ribosomal subunits or 70S ribosomes.

Its subcellular location is the cytoplasm. One of several proteins that assist in the late maturation steps of the functional core of the 30S ribosomal subunit. Associates with free 30S ribosomal subunits (but not with 30S subunits that are part of 70S ribosomes or polysomes). Required for efficient processing of 16S rRNA. May interact with the 5'-terminal helix region of 16S rRNA. The polypeptide is Ribosome-binding factor A (Burkholderia vietnamiensis (strain G4 / LMG 22486) (Burkholderia cepacia (strain R1808))).